A 260-amino-acid polypeptide reads, in one-letter code: Imidazole glycerol phosphate synthase subunit HisF (260 aa).

Catalysis depends on residues Asp-11 and Asp-130.

Belongs to the HisA/HisF family. As to quaternary structure, heterodimer of HisH and HisF.

The protein resides in the cytoplasm. It carries out the reaction 5-[(5-phospho-1-deoxy-D-ribulos-1-ylimino)methylamino]-1-(5-phospho-beta-D-ribosyl)imidazole-4-carboxamide + L-glutamine = D-erythro-1-(imidazol-4-yl)glycerol 3-phosphate + 5-amino-1-(5-phospho-beta-D-ribosyl)imidazole-4-carboxamide + L-glutamate + H(+). It participates in amino-acid biosynthesis; L-histidine biosynthesis; L-histidine from 5-phospho-alpha-D-ribose 1-diphosphate: step 5/9. Its function is as follows. IGPS catalyzes the conversion of PRFAR and glutamine to IGP, AICAR and glutamate. The HisF subunit catalyzes the cyclization activity that produces IGP and AICAR from PRFAR using the ammonia provided by the HisH subunit. The chain is Imidazole glycerol phosphate synthase subunit HisF from Thermomicrobium roseum (strain ATCC 27502 / DSM 5159 / P-2).